A 585-amino-acid polypeptide reads, in one-letter code: Proline--tRNA ligase (585 aa).

It belongs to the class-II aminoacyl-tRNA synthetase family. ProS type 1 subfamily. Homodimer.

Its subcellular location is the cytoplasm. It carries out the reaction tRNA(Pro) + L-proline + ATP = L-prolyl-tRNA(Pro) + AMP + diphosphate. In terms of biological role, catalyzes the attachment of proline to tRNA(Pro) in a two-step reaction: proline is first activated by ATP to form Pro-AMP and then transferred to the acceptor end of tRNA(Pro). As ProRS can inadvertently accommodate and process non-cognate amino acids such as alanine and cysteine, to avoid such errors it has two additional distinct editing activities against alanine. One activity is designated as 'pretransfer' editing and involves the tRNA(Pro)-independent hydrolysis of activated Ala-AMP. The other activity is designated 'posttransfer' editing and involves deacylation of mischarged Ala-tRNA(Pro). The misacylated Cys-tRNA(Pro) is not edited by ProRS. In Mycolicibacterium vanbaalenii (strain DSM 7251 / JCM 13017 / BCRC 16820 / KCTC 9966 / NRRL B-24157 / PYR-1) (Mycobacterium vanbaalenii), this protein is Proline--tRNA ligase.